A 156-amino-acid chain; its full sequence is Small ribosomal subunit protein uS7c (156 aa).

This sequence belongs to the universal ribosomal protein uS7 family. In terms of assembly, part of the 30S ribosomal subunit.

Its subcellular location is the plastid. It is found in the chloroplast. Functionally, one of the primary rRNA binding proteins, it binds directly to 16S rRNA where it nucleates assembly of the head domain of the 30S subunit. The chain is Small ribosomal subunit protein uS7c (rps7) from Phaeodactylum tricornutum (strain CCAP 1055/1).